The sequence spans 337 residues: 4-hydroxyproline 2-epimerase 2 (337 aa).

The Proton acceptor role is filled by C90. Residues 91–92 (GH), H223, and D249 contribute to the substrate site. The Proton donor role is filled by C253. Position 254–255 (254–255 (GT)) interacts with substrate.

This sequence belongs to the proline racemase family.

It carries out the reaction trans-4-hydroxy-L-proline = cis-4-hydroxy-D-proline. Functionally, catalyzes the epimerization of trans-4-hydroxy-L-proline (t4LHyp) to cis-4-hydroxy-D-proline (c4DHyp). Is likely involved in a degradation pathway that converts t4LHyp to alpha-ketoglutarate. Can also catalyze the epimerization of trans-3-hydroxy-L-proline (t3LHyp) to cis-3-hydroxy-D-proline (c3DHyp), albeit with 170-fold lower efficiency. Displays no proline racemase activity. The polypeptide is 4-hydroxyproline 2-epimerase 2 (Brucella anthropi (strain ATCC 49188 / DSM 6882 / CCUG 24695 / JCM 21032 / LMG 3331 / NBRC 15819 / NCTC 12168 / Alc 37) (Ochrobactrum anthropi)).